We begin with the raw amino-acid sequence, 90 residues long: U7-theraphotoxin-Hhn1c (90 aa).

Residues 1 to 19 (MKTAIFTVVLALAVFAVLS) form the signal peptide. A propeptide spanning residues 20 to 50 (FGWEANEKALSEEFTELIHEKEAASETEARE) is cleaved from the precursor. 3 disulfides stabilise this stretch: Cys51-Cys65, Cys58-Cys70, and Cys64-Cys81.

Belongs to the neurotoxin 10 (Hwtx-1) family. 13 (Hntx-13) subfamily. Expressed by the venom gland.

Its subcellular location is the secreted. In terms of biological role, ion channel inhibitor. The polypeptide is U7-theraphotoxin-Hhn1c (Cyriopagopus hainanus (Chinese bird spider)).